A 45-amino-acid polypeptide reads, in one-letter code: uncharacterized protein (45 aa).

A helical membrane pass occupies residues 10 to 27; that stretch reads LLYFVLFVDIYGIFTNNI.

The protein resides in the membrane. This is an uncharacterized protein from Dictyostelium discoideum (Social amoeba).